The sequence spans 362 residues: 3-dehydroquinate synthase (362 aa).

Residues 70-75 (DGEKYK), 104-108 (GVIGD), 128-129 (TT), Lys-141, Lys-150, and 168-171 (TLNT) contribute to the NAD(+) site. Residues Glu-183, His-246, and His-263 each contribute to the Zn(2+) site.

The protein belongs to the sugar phosphate cyclases superfamily. Dehydroquinate synthase family. NAD(+) serves as cofactor. The cofactor is Co(2+). Zn(2+) is required as a cofactor.

The protein localises to the cytoplasm. The catalysed reaction is 7-phospho-2-dehydro-3-deoxy-D-arabino-heptonate = 3-dehydroquinate + phosphate. Its pathway is metabolic intermediate biosynthesis; chorismate biosynthesis; chorismate from D-erythrose 4-phosphate and phosphoenolpyruvate: step 2/7. In terms of biological role, catalyzes the conversion of 3-deoxy-D-arabino-heptulosonate 7-phosphate (DAHP) to dehydroquinate (DHQ). This is 3-dehydroquinate synthase from Haemophilus influenzae (strain ATCC 51907 / DSM 11121 / KW20 / Rd).